The chain runs to 407 residues: MEIYIVGGAVRDRLLGLPVKDRDWVVVGSTPDEMLAQGYRPVGKDFPVFLHPETQEEYALARTERKIAKGYHGFTFHTSPEVTLEEDLARRDLTINAIAEAADGSLTDPYGGQEDLKAGVLRHVSEAFAEDPVRILRLARFAARFDFAVAPETMALMRRMVDDGEADALVAERVWQELAKGLMEDKPSRMFLTLRECGALARILPEVDALFGVPQRADHHPEIDCGDHVMRVLDYAAAAGQPLAVRFAALGHDLGKALTPAKVLPRHIGHEEGGIAPLAELCRRLRVPNDCRDLAHITMVHHTKVHRALELRPDTVLRLLKDCDALRRPERFLQMLDACLADTRGRLGFERAPYPQKDYLQAQLAATLQIDAGAIAAGCADKAAIPATIDAARTAVIAKCKEEWKED.

ATP is bound by residues G8 and R11. CTP is bound by residues G8 and R11. D21 and D23 together coordinate Mg(2+). The ATP site is built by R91, R137, and R140. CTP-binding residues include R91, R137, and R140. Residues 225–326 (CGDHVMRVLD…LRLLKDCDAL (102 aa)) form the HD domain.

Belongs to the tRNA nucleotidyltransferase/poly(A) polymerase family. Bacterial CCA-adding enzyme type 1 subfamily. Monomer. Can also form homodimers and oligomers. The cofactor is Mg(2+). It depends on Ni(2+) as a cofactor.

It carries out the reaction a tRNA precursor + 2 CTP + ATP = a tRNA with a 3' CCA end + 3 diphosphate. It catalyses the reaction a tRNA with a 3' CCA end + 2 CTP + ATP = a tRNA with a 3' CCACCA end + 3 diphosphate. Catalyzes the addition and repair of the essential 3'-terminal CCA sequence in tRNAs without using a nucleic acid template. Adds these three nucleotides in the order of C, C, and A to the tRNA nucleotide-73, using CTP and ATP as substrates and producing inorganic pyrophosphate. tRNA 3'-terminal CCA addition is required both for tRNA processing and repair. Also involved in tRNA surveillance by mediating tandem CCA addition to generate a CCACCA at the 3' terminus of unstable tRNAs. While stable tRNAs receive only 3'-terminal CCA, unstable tRNAs are marked with CCACCA and rapidly degraded. The polypeptide is Multifunctional CCA protein (Chromobacterium violaceum (strain ATCC 12472 / DSM 30191 / JCM 1249 / CCUG 213 / NBRC 12614 / NCIMB 9131 / NCTC 9757 / MK)).